A 338-amino-acid chain; its full sequence is Solute carrier family 35 member G5 (338 aa).

Residues 1-21 are disordered; that stretch reads MAGSHPYFNLPDSTHPSPPSA. 9 consecutive transmembrane segments (helical) span residues 37–57, 67–87, 105–125, 160–180, 190–210, 221–241, 250–270, 281–301, and 305–325; these read TNGLLVALLGGGLPAGFVGPL, LPSLELLICRCLFHLPIALPL, CFCALLNVLSIGCAYSAVQVV, CGLLGSILGLIIIVGPGLWTL, ALGYVQAFLGGLALSLGLLVY, TVAFLSGLVGLLGSVPGLFVL, LLSWSCVGAVGILALVSFTCV, LVCAVLHSEVVVALILQYYVL, and VAPSDIMGAGIVLGSIAIITA. One can recognise an EamA 1 domain in the interval 49–174; sequence LPAGFVGPLS…SILGLIIIVG (126 aa). One can recognise an EamA 2 domain in the interval 272 to 325; that stretch reads YAVTKAHPALVCAVLHSEVVVALILQYYVLHETVAPSDIMGAGIVLGSIAIITA.

Belongs to the SLC35G solute transporter family.

It localises to the membrane. The sequence is that of Solute carrier family 35 member G5 (SLC35G5) from Pan troglodytes (Chimpanzee).